We begin with the raw amino-acid sequence, 451 residues long: MLRLCFFISFMCLVKSDTDETCPSFTRLSFHSAVVGTGLSVRLMLYTQRDQTCAQIINSTALGSLNVTKKTTFIIHGFRPTGSPPVWIEELVQSLISVQEMNVVVVDWNRGATTVIYPHASSKTRQVASILKEFIDQMLVKGASLDNIYMIGVSLGAHIAGFVGESYEGKLGRVTGLDPAGPLFNGRPPEERLDPSDALFVDVIHSDTDALGYKEALGHIDFYPNGGLDQPGCPKTIFGGIKYFKCDHQMSVYLYLASLQNNCSITAYPCDSYRDYRNGKCVSCGAGQIVPCPRVGYYADSWKEYLWDRDPPMTKAFFDTAETKPYCMYHYFVDIVSWNKSVRRGFITIKLRGEDGNITESKIDHEPSAFEKYHQVSLLARFNRDLDKVAEISLLFSTGSVVGPKYKLRVLQMKLRSLAHPDRPHLCRYDLVLMENVETSFQPILCSQQQM.

An N-terminal signal peptide occupies residues 1 to 16 (MLRLCFFISFMCLVKS). Asn-66 is a glycosylation site (N-linked (GlcNAc...) asparagine). The Nucleophile role is filled by Ser-154. The Charge relay system role is filled by Asp-178. The cysteines at positions 233 and 246 are disulfide-linked. The Charge relay system role is filled by His-248. 3 disulfides stabilise this stretch: Cys-270–Cys-281, Cys-284–Cys-292, and Cys-427–Cys-446.

Belongs to the AB hydrolase superfamily. Lipase family. In terms of assembly, interacts with TTMP/C3orf52. Expressed in placenta and colon. Weakly expressed in small intestine.

The protein localises to the secreted. It localises to the cell membrane. It carries out the reaction 1-hexadecanoyl-2-(9Z-octadecenoyl)-sn-glycero-3-phosphate + H2O = 2-(9Z-octadecenoyl)-sn-glycero-3-phosphate + hexadecanoate + H(+). Hydrolyzes specifically phosphatidic acid (PA) to produce 2-acyl lysophosphatidic acid (LPA; a potent bioactive lipid mediator) and fatty acid. Does not hydrolyze other phospholipids, like phosphatidylserine (PS), phosphatidylcholine (PC) and phosphatidylethanolamine (PE) or triacylglycerol (TG). The chain is Lipase member H (Liph) from Mus musculus (Mouse).